We begin with the raw amino-acid sequence, 239 residues long: Ribosomal RNA small subunit methyltransferase G (239 aa).

Residues G79, F84, 130 to 131, and R149 each bind S-adenosyl-L-methionine; that span reads AE. The interval 218-239 is disordered; sequence KKTKTPKKYPRQAGTPSKKPIS.

The protein belongs to the methyltransferase superfamily. RNA methyltransferase RsmG family.

The protein resides in the cytoplasm. Specifically methylates the N7 position of a guanine in 16S rRNA. This is Ribosomal RNA small subunit methyltransferase G from Leuconostoc mesenteroides subsp. mesenteroides (strain ATCC 8293 / DSM 20343 / BCRC 11652 / CCM 1803 / JCM 6124 / NCDO 523 / NBRC 100496 / NCIMB 8023 / NCTC 12954 / NRRL B-1118 / 37Y).